A 598-amino-acid polypeptide reads, in one-letter code: Aspartate--tRNA(Asp/Asn) ligase (598 aa).

Glu177 serves as a coordination point for L-aspartate. Residues 201-204 (QLFK) are aspartate. Position 223 (Arg223) interacts with L-aspartate. ATP is bound by residues 223–225 (RDE) and Gln232. His456 serves as a coordination point for L-aspartate. Glu493 contacts ATP. Arg500 lines the L-aspartate pocket. 545 to 548 (GLDR) contributes to the ATP binding site.

The protein belongs to the class-II aminoacyl-tRNA synthetase family. Type 1 subfamily. Homodimer.

It localises to the cytoplasm. The enzyme catalyses tRNA(Asx) + L-aspartate + ATP = L-aspartyl-tRNA(Asx) + AMP + diphosphate. In terms of biological role, aspartyl-tRNA synthetase with relaxed tRNA specificity since it is able to aspartylate not only its cognate tRNA(Asp) but also tRNA(Asn). Reaction proceeds in two steps: L-aspartate is first activated by ATP to form Asp-AMP and then transferred to the acceptor end of tRNA(Asp/Asn). In Prochlorococcus marinus (strain AS9601), this protein is Aspartate--tRNA(Asp/Asn) ligase.